The chain runs to 569 residues: Sulfite reductase [NADPH] hemoprotein beta-component (569 aa).

The [4Fe-4S] cluster site is built by C434, C440, C479, and C483. C483 contacts siroheme.

The protein belongs to the nitrite and sulfite reductase 4Fe-4S domain family. As to quaternary structure, alpha(8)-beta(8). The alpha component is a flavoprotein, the beta component is a hemoprotein. The cofactor is siroheme. Requires [4Fe-4S] cluster as cofactor.

The enzyme catalyses hydrogen sulfide + 3 NADP(+) + 3 H2O = sulfite + 3 NADPH + 4 H(+). It functions in the pathway sulfur metabolism; hydrogen sulfide biosynthesis; hydrogen sulfide from sulfite (NADPH route): step 1/1. In terms of biological role, component of the sulfite reductase complex that catalyzes the 6-electron reduction of sulfite to sulfide. This is one of several activities required for the biosynthesis of L-cysteine from sulfate. The chain is Sulfite reductase [NADPH] hemoprotein beta-component from Staphylococcus carnosus (strain TM300).